A 109-amino-acid polypeptide reads, in one-letter code: Prefoldin subunit 1 (109 aa).

Ser2 is modified (N-acetylserine).

This sequence belongs to the prefoldin subunit beta family. Heterohexamer of two PFD-alpha type and four PFD-beta type subunits.

It is found in the cytoplasm. In terms of biological role, binds specifically to cytosolic chaperonin (c-CPN) and transfers target proteins to it. Binds to nascent polypeptide chain and promotes folding in an environment in which there are many competing pathways for nonnative proteins. The chain is Prefoldin subunit 1 (PFD1) from Saccharomyces cerevisiae (strain ATCC 204508 / S288c) (Baker's yeast).